We begin with the raw amino-acid sequence, 333 residues long: DnaJ homolog subfamily C member 25 homolog (333 aa).

A helical transmembrane segment spans residues 8 to 28 (LVLLALLPTMALGLLEGLYCG). In terms of domain architecture, J spans 31-99 (NCYDVLGVTR…ESRTDYDYML (69 aa)). A helical membrane pass occupies residues 123–143 (VRVVIVVVLTIVSVIQYYSGW). A coiled-coil region spans residues 158–208 (KYRNQALEIARDEIQEKIQKKGKNRMSKNDQRDELERIIRRVIEEKMDVKG). A helical membrane pass occupies residues 218–238 (VLWVQLIICPYTILSFIVWHA).

This sequence belongs to the DNAJC25 family.

The protein localises to the membrane. The sequence is that of DnaJ homolog subfamily C member 25 homolog from Drosophila melanogaster (Fruit fly).